A 156-amino-acid polypeptide reads, in one-letter code: Small ribosomal subunit protein uS7 (156 aa).

Belongs to the universal ribosomal protein uS7 family. Part of the 30S ribosomal subunit. Contacts proteins S9 and S11.

Functionally, one of the primary rRNA binding proteins, it binds directly to 16S rRNA where it nucleates assembly of the head domain of the 30S subunit. Is located at the subunit interface close to the decoding center, probably blocks exit of the E-site tRNA. The protein is Small ribosomal subunit protein uS7 of Nitrosospira multiformis (strain ATCC 25196 / NCIMB 11849 / C 71).